Here is a 153-residue protein sequence, read N- to C-terminus: Transcription antitermination protein NusB (153 aa).

The protein belongs to the NusB family.

Involved in transcription antitermination. Required for transcription of ribosomal RNA (rRNA) genes. Binds specifically to the boxA antiterminator sequence of the ribosomal RNA (rrn) operons. The protein is Transcription antitermination protein NusB of Clostridium tetani (strain Massachusetts / E88).